Consider the following 820-residue polypeptide: Trimethylamine-N-oxide reductase (820 aa).

Positions 1–33 (MAITRRSFLKGVATTSAASVIGPSLLASASANA) form a signal peptide, tat-type signal. Mo-bis(molybdopterin guanine dinucleotide) is bound at residue S179.

This sequence belongs to the prokaryotic molybdopterin-containing oxidoreductase family. It depends on Mo-bis(molybdopterin guanine dinucleotide) as a cofactor. Predicted to be exported by the Tat system. The position of the signal peptide cleavage has not been experimentally proven.

It is found in the periplasm. It catalyses the reaction trimethylamine + 2 Fe(III)-[cytochrome c] + H2O = trimethylamine N-oxide + 2 Fe(II)-[cytochrome c] + 3 H(+). Functionally, reduces trimethylamine-N-oxide (TMAO) into trimethylamine; an anaerobic reaction coupled to energy-yielding reactions. In Vibrio vulnificus (strain YJ016), this protein is Trimethylamine-N-oxide reductase (torA).